A 692-amino-acid polypeptide reads, in one-letter code: Elongation factor G (692 aa).

The region spanning 8 to 282 is the tr-type G domain; it reads ERTRNIGIMA…AIVDYLPAPT (275 aa). GTP contacts are provided by residues 17–24, 81–85, and 135–138; these read AHIDAGKT, DTPGH, and NKMD.

Belongs to the TRAFAC class translation factor GTPase superfamily. Classic translation factor GTPase family. EF-G/EF-2 subfamily.

Its subcellular location is the cytoplasm. Catalyzes the GTP-dependent ribosomal translocation step during translation elongation. During this step, the ribosome changes from the pre-translocational (PRE) to the post-translocational (POST) state as the newly formed A-site-bound peptidyl-tRNA and P-site-bound deacylated tRNA move to the P and E sites, respectively. Catalyzes the coordinated movement of the two tRNA molecules, the mRNA and conformational changes in the ribosome. The polypeptide is Elongation factor G (Desulforamulus reducens (strain ATCC BAA-1160 / DSM 100696 / MI-1) (Desulfotomaculum reducens)).